The following is a 249-amino-acid chain: MLLFSSLPVLLLCVVTASYSEIKTCEDAQKTCSVITCGIPVTNGTPGRDGRDGPKGEKGEPGPGFRGSQGPPGKMGPPGNIGETGPLGPKGQKGDPGDTSGVEAKLANLEGQIRILKSELDHVKKLQTFSLGKKSRKKLYVTNGEMMPFSKVKTLCAELQATVATPKNAEENKAIQDMAPDVAFLGITDEVTEGQFMYVTGGRMTYSNWKSNEPNDHGSGEDCVILQRDGLWNDISCSSSFLAVCEFPA.

A signal peptide spans 1–20 (MLLFSSLPVLLLCVVTASYS). Positions 41-102 (VTNGTPGRDG…KGDPGDTSGV (62 aa)) are disordered. The span at 48 to 60 (RDGRDGPKGEKGE) shows a compositional bias: basic and acidic residues. Proline 54 is subject to 4-hydroxyproline. A 5-hydroxylysine mark is found at lysine 55 and lysine 58. Residues lysine 55 and lysine 58 are each glycosylated (O-linked (Gal...) hydroxylysine). Residues proline 61, proline 72, proline 78, and proline 89 each carry the 4-hydroxyproline modification. The 35-residue stretch at 64–98 (GFRGSQGPPGKMGPPGNIGETGPLGPKGQKGDPGD) folds into the Collagen-like domain. Residues lysine 90 and lysine 93 each carry the 5-hydroxylysine modification. Lysine 90 and lysine 93 each carry an O-linked (Gal...) hydroxylysine glycan. One can recognise a C-type lectin domain in the interval 135 to 246 (SRKKLYVTNG…CSSSFLAVCE (112 aa)). 2 disulfide bridges follow: cysteine 156–cysteine 245 and cysteine 223–cysteine 237. The Ca(2+) site is built by aspartate 189, glutamate 193, glutamate 213, asparagine 215, aspartate 216, glutamate 221, aspartate 222, asparagine 233, and aspartate 234. The tract at residues 213-221 (EPNDHGSGE) is calcium-dependent carbohydrate binding.

As to quaternary structure, interacts with MASP1 and MASP2. Forms oligomeric complexes of 3, 4, 5 or, predominantly, 6 homotrimers. The homotrimers appear as globular heads that are connected to a central hub by thin stalks. Hydroxylated on lysine and proline residues within the collagen-like domain. Post-translationally, O-glycosylated. O-linked glycans on hydroxylysine residues consist of Glc-Gal disaccharides bound to the oxygen atom of post-translationally added hydroxyl groups. Detected in blood serum (at protein level). Expressed in liver. Weakly expressed in lung, testis and brain. Not detected in bone marrow and heart.

It is found in the secreted. Functionally, calcium-dependent lectin. Plays a role in the innate immune response by binding mannose, fucose and N-acetylglucosamine on bacteria, including strains of A.suis, H.parasuis and A.pleuropneumoniae, and activates the lectin complement pathway. According to some authors, it only binds mannose. The sequence is that of Mannose-binding protein A from Sus scrofa (Pig).